Reading from the N-terminus, the 222-residue chain is Methylthioribulose-1-phosphate dehydratase (222 aa).

Positions 94 and 96 each coordinate Zn(2+).

The protein belongs to the aldolase class II family. MtnB subfamily. Zn(2+) serves as cofactor.

It catalyses the reaction 5-(methylsulfanyl)-D-ribulose 1-phosphate = 5-methylsulfanyl-2,3-dioxopentyl phosphate + H2O. The protein operates within amino-acid biosynthesis; L-methionine biosynthesis via salvage pathway; L-methionine from S-methyl-5-thio-alpha-D-ribose 1-phosphate: step 2/6. Functionally, catalyzes the dehydration of methylthioribulose-1-phosphate (MTRu-1-P) into 2,3-diketo-5-methylthiopentyl-1-phosphate (DK-MTP-1-P). The protein is Methylthioribulose-1-phosphate dehydratase of Yersinia pseudotuberculosis serotype O:1b (strain IP 31758).